A 508-amino-acid polypeptide reads, in one-letter code: Photosystem II CP47 reaction center protein (508 aa).

A run of 6 helical transmembrane segments spans residues 21–36 (AVHLMHTSLVSGWAGS), 101–115 (IVLSGLLFAASIWHW), 140–156 (GIHLFLSGVLCFGFGAF), 203–218 (IAAGILGVLAGLFHLC), 237–252 (VLSSSIAAVFWAAFVV), and 457–472 (CFALLFFFGHIWHGAR).

Belongs to the PsbB/PsbC family. PsbB subfamily. As to quaternary structure, PSII is composed of 1 copy each of membrane proteins PsbA, PsbB, PsbC, PsbD, PsbE, PsbF, PsbH, PsbI, PsbJ, PsbK, PsbL, PsbM, PsbT, PsbX, PsbY, PsbZ, Psb30/Ycf12, at least 3 peripheral proteins of the oxygen-evolving complex and a large number of cofactors. It forms dimeric complexes. The cofactor is Binds multiple chlorophylls. PSII binds additional chlorophylls, carotenoids and specific lipids..

The protein localises to the plastid. The protein resides in the chloroplast thylakoid membrane. In terms of biological role, one of the components of the core complex of photosystem II (PSII). It binds chlorophyll and helps catalyze the primary light-induced photochemical processes of PSII. PSII is a light-driven water:plastoquinone oxidoreductase, using light energy to abstract electrons from H(2)O, generating O(2) and a proton gradient subsequently used for ATP formation. The sequence is that of Photosystem II CP47 reaction center protein from Chlorella vulgaris (Green alga).